A 469-amino-acid polypeptide reads, in one-letter code: Peripherin (469 aa).

Composition is skewed to low complexity over residues 1 to 18 and 27 to 53; these read MSHP…SYRR and SPGA…PGSS. The disordered stretch occupies residues 1–60; the sequence is MSHPSGLRSSVSSTSYRRTFGPPPSLSPGAFSYSSSSRFSSSRLLGSASPGSSVRLGSFR. The interval 1 to 98 is head; sequence MSHPSGLRSS…FLATRSNEKQ (98 aa). Position 16 is a 3'-nitrotyrosine (tyrosine 16). 3 positions are modified to phosphoserine: serine 27, serine 49, and serine 58. An IF rod domain is found at 96-406; the sequence is EKQELQELND…KLLEGEESRI (311 aa). The interval 99–131 is coil 1A; it reads ELQELNDRFANFIEKVRFLEQQNAALRGELNQA. A linker 1 region spans residues 132 to 142; that stretch reads RGQEPARADQL. The interval 143 to 238 is coil 1B; that stretch reads CQQELRELRR…KLHEEELRDL (96 aa). The interval 239 to 261 is linker 2; it reads QLSVESQQVQHVEVEATVKPELT. A coil 2 region spans residues 262–404; the sequence is AALRDIRAQY…YRKLLEGEES (143 aa). The residue at position 378 (tyrosine 378) is a 3'-nitrotyrosine. A tail region spans residues 405–469; it reads RISVPVHSFA…SELDKSPQSY (65 aa). The tract at residues 447–469 is disordered; that stretch reads GEQVVTESQKEQHSELDKSPQSY. Tyrosine 469 carries the post-translational modification Phosphotyrosine.

This sequence belongs to the intermediate filament family. In terms of assembly, forms homodimers (in vitro). Homopolymerizes into a filamentous network (in vitro). Forms heterodimers with NEFL, NEFM or NEFH (in vitro). Interacts with DST (via C-terminus). Interacts with RAB7A; the interaction is direct. Interacts with PRKCE (via phorbol-ester/DAG-type 2 domain). Phosphorylated; phosphorylation increases after nerve injury in regenerating neurons.

It localises to the cytoplasm. The protein resides in the cytoskeleton. Its subcellular location is the cell projection. It is found in the axon. The protein localises to the perikaryon. Its function is as follows. Class-III neuronal intermediate filament protein. May form an independent structural network without the involvement of other neurofilaments or may cooperate with the neuronal intermediate filament proteins NEFL, NEFH, NEFM and INA to form a filamentous network. Assembly of the neuronal intermediate filaments may be regulated by RAB7A. Plays a role in the development of unmyelinated sensory neurons. May be involved in axon elongation and axon regeneration after injury. Inhibits neurite extension in type II spiral ganglion neurons in the cochlea. The polypeptide is Peripherin (PRPH) (Bos taurus (Bovine)).